Here is a 330-residue protein sequence, read N- to C-terminus: Succinoglycan biosynthesis protein ExoA (330 aa).

The next 3 helical transmembrane spans lie at 116-136 (ALATGADSVVVAMQTVGFSTF), 260-280 (IAFGALLAIVNWMAVVPVGVW), and 299-319 (YGPLAAVAAMVMHLAWSAGFW).

It belongs to the glycosyltransferase 2 family.

It localises to the cell membrane. The protein operates within glycan metabolism; exopolysaccharide biosynthesis. In terms of biological role, glycosyltransferase required for the synthesis of succinoglycan (EPS I). Needed for the addition of the second sugar (glucose). Catalyzes the formation of a beta-1,3 linkage with the galactose lipid carrier. In Rhizobium meliloti (strain 1021) (Ensifer meliloti), this protein is Succinoglycan biosynthesis protein ExoA (exoA).